The following is a 634-amino-acid chain: Threonine--tRNA ligase (634 aa).

Residues M1–T61 form the TGS domain. The tract at residues D241–P532 is catalytic. Positions 332, 383, and 509 each coordinate Zn(2+).

It belongs to the class-II aminoacyl-tRNA synthetase family. As to quaternary structure, homodimer. Zn(2+) serves as cofactor.

It localises to the cytoplasm. It catalyses the reaction tRNA(Thr) + L-threonine + ATP = L-threonyl-tRNA(Thr) + AMP + diphosphate + H(+). Functionally, catalyzes the attachment of threonine to tRNA(Thr) in a two-step reaction: L-threonine is first activated by ATP to form Thr-AMP and then transferred to the acceptor end of tRNA(Thr). Also edits incorrectly charged L-seryl-tRNA(Thr). This is Threonine--tRNA ligase from Francisella tularensis subsp. novicida (strain U112).